A 125-amino-acid chain; its full sequence is MPTIQQLIRSERSKLKKKTKSPALKQCPQRRGVCTRVYTTTPKKPNSALRKVARVRLTSGFEVTAYIPGIGHNLQEHSVVLIRGGRVKDLPGVRYHIIRGTLDAQGVKDRKQGRSKYGTKRPKKA.

The interval 9–28 is disordered; the sequence is RSERSKLKKKTKSPALKQCP. A 3-methylthioaspartic acid modification is found at Asp89. The tract at residues 104-125 is disordered; the sequence is AQGVKDRKQGRSKYGTKRPKKA. Over residues 113 to 125 the composition is skewed to basic residues; that stretch reads GRSKYGTKRPKKA.

It belongs to the universal ribosomal protein uS12 family. Part of the 30S ribosomal subunit. Contacts proteins S8 and S17. May interact with IF1 in the 30S initiation complex.

With S4 and S5 plays an important role in translational accuracy. In terms of biological role, interacts with and stabilizes bases of the 16S rRNA that are involved in tRNA selection in the A site and with the mRNA backbone. Located at the interface of the 30S and 50S subunits, it traverses the body of the 30S subunit contacting proteins on the other side and probably holding the rRNA structure together. The combined cluster of proteins S8, S12 and S17 appears to hold together the shoulder and platform of the 30S subunit. This chain is Small ribosomal subunit protein uS12, found in Rippkaea orientalis (strain PCC 8801 / RF-1) (Cyanothece sp. (strain PCC 8801)).